The following is a 192-amino-acid chain: Large ribosomal subunit protein bL25 (192 aa).

This sequence belongs to the bacterial ribosomal protein bL25 family. CTC subfamily. As to quaternary structure, part of the 50S ribosomal subunit; part of the 5S rRNA/L5/L18/L25 subcomplex. Contacts the 5S rRNA. Binds to the 5S rRNA independently of L5 and L18.

Its function is as follows. This is one of the proteins that binds to the 5S RNA in the ribosome where it forms part of the central protuberance. The chain is Large ribosomal subunit protein bL25 from Cytophaga hutchinsonii (strain ATCC 33406 / DSM 1761 / CIP 103989 / NBRC 15051 / NCIMB 9469 / D465).